The primary structure comprises 877 residues: MSFIKKIKHYFADPADLPQDEAPDSVPGLVPPPSNFVPVYPEPTYSDTVSKKGTIVRVVRHTASKLTKHGDSSQSLSTLPNNDISVGEYVEPLPSVPGWLKQNIFSHFGTRLLHYLRSLFPIMNWLPRYNWNWLVYDFIAGITVGCVVVPQGMSYAKVATLPAQYGLYSSFVGVAIYCIFATSKDVSIGPVAVMSLVTSKVIANVQAKDPNYDAAQIGTTLALLAGAITCGLGLLRLGFIIEFIPVPAVAGFTTGSALNIMAGQVSSLMGYKSRVHTNAATYRVIIQTLQNLPHTKVDAAFGLVSLFILYLVRYTCQHLIKRYTKFQRVFFLTNVLRSAVIIIVGTAISYGVCKHRRENPPISILGTVPSGFRDMGVPVISRKLCADLASELPVSVIVLLLEHISIAKSFGRVNDYKVIPDQELIAMGATNLIGVFFHAYPATGSFSRSAINAKSGVRTPLGGIFTAGVVVLALYCLTGAFYYIPNAVLSAVIIHSVFDLIIPWRQTLLFWRMQPLEALIFICAVFVSVFSSIENGIYTAVCLSAALLLFRIAKPSGSFLGILKIANKFDDDENSIDVVRDIYVPLNQKGMNPNLTVRDPPAGVLIFRLQESFTYPNAGHVNSMLTSKAKTVTRRGNANIYKKASDRPWNDPAPRKKKNAPEVEDTRPLLRAIILDFSAVNHIDTTGVQALVDTRKELEIYAGDEVEFHFTDINNDWIKRTLVAAGFGKARDATKYTSRSIEVGSAAPLRDIETPMAPGNSRIVMPSSVRVRPFDEEEAIESSIPAIVSEDGADSDTISVSDDKDKKVEGHRPSQDPTFSHHEYYPVISTTYPFFHVDVTSAVVDIQYRHVLDVNYKPKIVTNEVENENIEHSDGAA.

A run of 13 helical transmembrane segments spans residues 133-153, 161-181, 186-206, 221-241, 243-263, 292-312, 329-349, 384-404, 424-444, 461-481, 484-504, 518-538, and 543-563; these read WLVY…PQGM, LPAQ…CIFA, VSIG…ANVQ, LALL…GFII, FIPV…IMAG, LPHT…LYLV, VFFL…TAIS, LCAD…LEHI, LIAM…PATG, LGGI…TGAF, IPNA…IIPW, ALIF…NGIY, and LSAA…LGIL. The 154-residue stretch at 594-747 folds into the STAS domain; the sequence is NLTVRDPPAG…SRSIEVGSAA (154 aa). Disordered stretches follow at residues 643-663 and 793-821; these read KASD…APEV and ADSD…TFSH. The segment covering 801–821 has biased composition (basic and acidic residues); sequence SDDKDKKVEGHRPSQDPTFSH.

The protein belongs to the SLC26A/SulP transporter (TC 2.A.53) family.

Its subcellular location is the membrane. In terms of biological role, high affinity uptake of sulfate into the cell. The protein is Probable sulfate permease C3H7.02 of Schizosaccharomyces pombe (strain 972 / ATCC 24843) (Fission yeast).